The sequence spans 173 residues: Peptide deformylase (173 aa).

Residues cysteine 98 and histidine 140 each coordinate Fe cation. Glutamate 141 is a catalytic residue. Histidine 144 lines the Fe cation pocket.

This sequence belongs to the polypeptide deformylase family. The cofactor is Fe(2+).

It catalyses the reaction N-terminal N-formyl-L-methionyl-[peptide] + H2O = N-terminal L-methionyl-[peptide] + formate. Its function is as follows. Removes the formyl group from the N-terminal Met of newly synthesized proteins. Requires at least a dipeptide for an efficient rate of reaction. N-terminal L-methionine is a prerequisite for activity but the enzyme has broad specificity at other positions. This Caulobacter sp. (strain K31) protein is Peptide deformylase.